The sequence spans 397 residues: 1-deoxy-D-xylulose 5-phosphate reductoisomerase (397 aa).

Positions 17, 18, 19, 20, 45, 47, and 130 each coordinate NADPH. 1-deoxy-D-xylulose 5-phosphate is bound at residue K131. E132 contributes to the NADPH binding site. Residue D156 coordinates Mn(2+). Residues S157, E158, S182, and H205 each coordinate 1-deoxy-D-xylulose 5-phosphate. E158 contacts Mn(2+). G211 is a binding site for NADPH. 1-deoxy-D-xylulose 5-phosphate contacts are provided by S218, N223, K224, and E227. E227 serves as a coordination point for Mn(2+).

It belongs to the DXR family. It depends on Mg(2+) as a cofactor. Mn(2+) serves as cofactor.

The catalysed reaction is 2-C-methyl-D-erythritol 4-phosphate + NADP(+) = 1-deoxy-D-xylulose 5-phosphate + NADPH + H(+). The protein operates within isoprenoid biosynthesis; isopentenyl diphosphate biosynthesis via DXP pathway; isopentenyl diphosphate from 1-deoxy-D-xylulose 5-phosphate: step 1/6. Functionally, catalyzes the NADPH-dependent rearrangement and reduction of 1-deoxy-D-xylulose-5-phosphate (DXP) to 2-C-methyl-D-erythritol 4-phosphate (MEP). The polypeptide is 1-deoxy-D-xylulose 5-phosphate reductoisomerase (Agrobacterium fabrum (strain C58 / ATCC 33970) (Agrobacterium tumefaciens (strain C58))).